The sequence spans 371 residues: Chaperone protein DnaJ (371 aa).

The J domain occupies 5-70; it reads DYYEVLGVNR…QKRAAYDQYG (66 aa). A disordered region spans residues 31–52; that stretch reads KYHPDRNPDNPKAEESFKEAKE. Residues 32-52 are compositionally biased toward basic and acidic residues; it reads YHPDRNPDNPKAEESFKEAKE. The CR-type zinc finger occupies 132–210; the sequence is RTETKIRIPV…CQGAGRVKKH (79 aa). The Zn(2+) site is built by Cys-145, Cys-148, Cys-162, Cys-165, Cys-184, Cys-187, Cys-198, and Cys-201. CXXCXGXG motif repeat units follow at residues 145-152, 162-169, 184-191, and 198-205; these read CETCHGSG, CTTCGGHG, CPKCHGSG, and CPSCQGAG.

It belongs to the DnaJ family. Homodimer. The cofactor is Zn(2+).

The protein localises to the cytoplasm. Its function is as follows. Participates actively in the response to hyperosmotic and heat shock by preventing the aggregation of stress-denatured proteins and by disaggregating proteins, also in an autonomous, DnaK-independent fashion. Unfolded proteins bind initially to DnaJ; upon interaction with the DnaJ-bound protein, DnaK hydrolyzes its bound ATP, resulting in the formation of a stable complex. GrpE releases ADP from DnaK; ATP binding to DnaK triggers the release of the substrate protein, thus completing the reaction cycle. Several rounds of ATP-dependent interactions between DnaJ, DnaK and GrpE are required for fully efficient folding. Also involved, together with DnaK and GrpE, in the DNA replication of plasmids through activation of initiation proteins. The chain is Chaperone protein DnaJ from Methylovorus sp. (strain SS1 / DSM 11726).